Reading from the N-terminus, the 410-residue chain is Translation initiation factor 2 subunit gamma (410 aa).

In terms of domain architecture, tr-type G spans 6 to 203 (QSEVNIGMVG…AIQEFIPTPK (198 aa)). The interval 15–22 (GHVDHGKT) is G1. D18, T22, G43, and S45 together coordinate Mg(2+). Residue 18-23 (DHGKTS) participates in GTP binding. The G2 stretch occupies residues 43-47 (GISIR). Residues C58, C61, C73, and C76 each contribute to the Zn(2+) site. Residues 90–93 (DAPG) are G3. Residues 146–149 (NKID) and 181–183 (SAH) contribute to the GTP site. The G4 stretch occupies residues 146-149 (NKID). Residues 181-183 (SAH) form a G5 region.

This sequence belongs to the TRAFAC class translation factor GTPase superfamily. Classic translation factor GTPase family. EIF2G subfamily. As to quaternary structure, heterotrimer composed of an alpha, a beta and a gamma chain. Mg(2+) serves as cofactor.

The catalysed reaction is GTP + H2O = GDP + phosphate + H(+). In terms of biological role, eIF-2 functions in the early steps of protein synthesis by forming a ternary complex with GTP and initiator tRNA. The polypeptide is Translation initiation factor 2 subunit gamma (Methanococcus vannielii (strain ATCC 35089 / DSM 1224 / JCM 13029 / OCM 148 / SB)).